A 195-amino-acid polypeptide reads, in one-letter code: ATP-dependent Clp protease proteolytic subunit (195 aa).

Residue Ser98 is the Nucleophile of the active site. His123 is an active-site residue.

It belongs to the peptidase S14 family. Fourteen ClpP subunits assemble into 2 heptameric rings which stack back to back to give a disk-like structure with a central cavity, resembling the structure of eukaryotic proteasomes.

It is found in the cytoplasm. The enzyme catalyses Hydrolysis of proteins to small peptides in the presence of ATP and magnesium. alpha-casein is the usual test substrate. In the absence of ATP, only oligopeptides shorter than five residues are hydrolyzed (such as succinyl-Leu-Tyr-|-NHMec, and Leu-Tyr-Leu-|-Tyr-Trp, in which cleavage of the -Tyr-|-Leu- and -Tyr-|-Trp bonds also occurs).. Cleaves peptides in various proteins in a process that requires ATP hydrolysis. Has a chymotrypsin-like activity. Plays a major role in the degradation of misfolded proteins. The sequence is that of ATP-dependent Clp protease proteolytic subunit from Wolinella succinogenes (strain ATCC 29543 / DSM 1740 / CCUG 13145 / JCM 31913 / LMG 7466 / NCTC 11488 / FDC 602W) (Vibrio succinogenes).